Here is a 320-residue protein sequence, read N- to C-terminus: Aspartate carbamoyltransferase catalytic subunit (320 aa).

Positions 68 and 69 each coordinate carbamoyl phosphate. K96 lines the L-aspartate pocket. Carbamoyl phosphate is bound by residues R118, H148, and Q151. 2 residues coordinate L-aspartate: R181 and R236. Carbamoyl phosphate-binding residues include G277 and P278.

The protein belongs to the aspartate/ornithine carbamoyltransferase superfamily. ATCase family. In terms of assembly, heterododecamer (2C3:3R2) of six catalytic PyrB chains organized as two trimers (C3), and six regulatory PyrI chains organized as three dimers (R2).

It carries out the reaction carbamoyl phosphate + L-aspartate = N-carbamoyl-L-aspartate + phosphate + H(+). Its pathway is pyrimidine metabolism; UMP biosynthesis via de novo pathway; (S)-dihydroorotate from bicarbonate: step 2/3. Its function is as follows. Catalyzes the condensation of carbamoyl phosphate and aspartate to form carbamoyl aspartate and inorganic phosphate, the committed step in the de novo pyrimidine nucleotide biosynthesis pathway. The polypeptide is Aspartate carbamoyltransferase catalytic subunit (Variovorax paradoxus (strain S110)).